Reading from the N-terminus, the 412-residue chain is Putative competence-damage inducible protein (412 aa).

This sequence belongs to the CinA family.

This Clostridium perfringens (strain SM101 / Type A) protein is Putative competence-damage inducible protein.